We begin with the raw amino-acid sequence, 207 residues long: Protein dct-5 (207 aa).

Residues 13 to 33 traverse the membrane as a helical segment; the sequence is LNFILSIMNSYLFVLIVSIGF.

Its subcellular location is the membrane. In terms of biological role, acts downstream of daf-16/foxo to suppress tumors induced by disruption of gld-1. Potentially a direct target of daf-15/foxo. The polypeptide is Protein dct-5 (dct-5) (Caenorhabditis elegans).